Consider the following 71-residue polypeptide: Pseudonajatoxin b (71 aa).

5 cysteine pairs are disulfide-bonded: Cys3–Cys21, Cys14–Cys42, Cys27–Cys31, Cys46–Cys58, and Cys59–Cys64.

This sequence belongs to the three-finger toxin family. Long-chain subfamily. Type II alpha-neurotoxin sub-subfamily. As to expression, expressed by the venom gland.

Its subcellular location is the secreted. Its function is as follows. Binds with high affinity to muscular (alpha-1/CHRNA1) and neuronal (alpha-7/CHRNA7) nicotinic acetylcholine receptor (nAChR) and inhibits acetylcholine from binding to the receptor, thereby impairing neuromuscular and neuronal transmission. The protein is Pseudonajatoxin b of Pseudonaja textilis (Eastern brown snake).